The primary structure comprises 132 residues: Small ribosomal subunit protein uS8 (132 aa).

This sequence belongs to the universal ribosomal protein uS8 family. In terms of assembly, part of the 30S ribosomal subunit. Contacts proteins S5 and S12.

In terms of biological role, one of the primary rRNA binding proteins, it binds directly to 16S rRNA central domain where it helps coordinate assembly of the platform of the 30S subunit. This chain is Small ribosomal subunit protein uS8, found in Xanthobacter autotrophicus (strain ATCC BAA-1158 / Py2).